Consider the following 413-residue polypeptide: Glutaminase (413 aa).

Residues 23 to 307 (GELADYIPEL…LSDDMGLHLM (285 aa)) form a glutaminase region. S65, N114, E160, N167, Y191, Y243, and V261 together coordinate substrate. The STAS domain occupies 316–413 (AVRSITRDGD…SDGTICKERV (98 aa)).

It belongs to the glutaminase family. Homotetramer.

The enzyme catalyses L-glutamine + H2O = L-glutamate + NH4(+). The protein is Glutaminase (glsA) of Corynebacterium glutamicum (strain ATCC 13032 / DSM 20300 / JCM 1318 / BCRC 11384 / CCUG 27702 / LMG 3730 / NBRC 12168 / NCIMB 10025 / NRRL B-2784 / 534).